Reading from the N-terminus, the 184-residue chain is Elongation factor P (184 aa).

Belongs to the elongation factor P family.

The protein localises to the cytoplasm. The protein operates within protein biosynthesis; polypeptide chain elongation. Involved in peptide bond synthesis. Stimulates efficient translation and peptide-bond synthesis on native or reconstituted 70S ribosomes in vitro. Probably functions indirectly by altering the affinity of the ribosome for aminoacyl-tRNA, thus increasing their reactivity as acceptors for peptidyl transferase. In Thermus thermophilus (strain ATCC BAA-163 / DSM 7039 / HB27), this protein is Elongation factor P.